Consider the following 178-residue polypeptide: Large ribosomal subunit protein uL6 (178 aa).

It belongs to the universal ribosomal protein uL6 family. As to quaternary structure, part of the 50S ribosomal subunit.

Its function is as follows. This protein binds to the 23S rRNA, and is important in its secondary structure. It is located near the subunit interface in the base of the L7/L12 stalk, and near the tRNA binding site of the peptidyltransferase center. The chain is Large ribosomal subunit protein uL6 from Frankia alni (strain DSM 45986 / CECT 9034 / ACN14a).